A 122-amino-acid chain; its full sequence is Large ribosomal subunit protein uL14 (122 aa).

This sequence belongs to the universal ribosomal protein uL14 family. In terms of assembly, part of the 50S ribosomal subunit. Forms a cluster with proteins L3 and L19. In the 70S ribosome, L14 and L19 interact and together make contacts with the 16S rRNA in bridges B5 and B8.

Its function is as follows. Binds to 23S rRNA. Forms part of two intersubunit bridges in the 70S ribosome. The polypeptide is Large ribosomal subunit protein uL14 (Pelobacter propionicus (strain DSM 2379 / NBRC 103807 / OttBd1)).